Reading from the N-terminus, the 101-residue chain is NADH-quinone oxidoreductase subunit K (101 aa).

The next 3 helical transmembrane spans lie at 4–24 (LTHYLVLAAVMFAISVLGIFL), 30–50 (IVLLMAIELMLLAVNFNFIAF), and 61–81 (IFVFFVLTVAAAESAIGLAIL).

Belongs to the complex I subunit 4L family. As to quaternary structure, NDH-1 is composed of 14 different subunits. Subunits NuoA, H, J, K, L, M, N constitute the membrane sector of the complex.

The protein resides in the cell inner membrane. It carries out the reaction a quinone + NADH + 5 H(+)(in) = a quinol + NAD(+) + 4 H(+)(out). Functionally, NDH-1 shuttles electrons from NADH, via FMN and iron-sulfur (Fe-S) centers, to quinones in the respiratory chain. The immediate electron acceptor for the enzyme in this species is believed to be ubiquinone. Couples the redox reaction to proton translocation (for every two electrons transferred, four hydrogen ions are translocated across the cytoplasmic membrane), and thus conserves the redox energy in a proton gradient. In Laribacter hongkongensis (strain HLHK9), this protein is NADH-quinone oxidoreductase subunit K.